We begin with the raw amino-acid sequence, 81 residues long: Cortexin-2 (81 aa).

A helical membrane pass occupies residues 29 to 49; it reads TGFAFVGILCIFLGLLIIRCF.

This sequence belongs to the cortexin family.

The protein resides in the membrane. This Homo sapiens (Human) protein is Cortexin-2 (CTXN2).